The following is a 437-amino-acid chain: Serine hydroxymethyltransferase 1 (437 aa).

Residues leucine 132 and 136–138 (GHL) each bind (6S)-5,6,7,8-tetrahydrofolate. Lysine 241 bears the N6-(pyridoxal phosphate)lysine mark.

Belongs to the SHMT family. As to quaternary structure, homodimer. Pyridoxal 5'-phosphate is required as a cofactor.

It is found in the cytoplasm. The catalysed reaction is (6R)-5,10-methylene-5,6,7,8-tetrahydrofolate + glycine + H2O = (6S)-5,6,7,8-tetrahydrofolate + L-serine. Its pathway is one-carbon metabolism; tetrahydrofolate interconversion. The protein operates within amino-acid biosynthesis; glycine biosynthesis; glycine from L-serine: step 1/1. Catalyzes the reversible interconversion of serine and glycine with tetrahydrofolate (THF) serving as the one-carbon carrier. This reaction serves as the major source of one-carbon groups required for the biosynthesis of purines, thymidylate, methionine, and other important biomolecules. Also exhibits THF-independent aldolase activity toward beta-hydroxyamino acids, producing glycine and aldehydes, via a retro-aldol mechanism. This is Serine hydroxymethyltransferase 1 from Mesorhizobium japonicum (strain LMG 29417 / CECT 9101 / MAFF 303099) (Mesorhizobium loti (strain MAFF 303099)).